The sequence spans 651 residues: DNA topoisomerase 3 (651 aa).

Residues 1–134 (MRLFIAEKPS…KRDKILRCLI (134 aa)) enclose the Toprim domain. Positions 7, 103, and 105 each coordinate Mg(2+). The Topo IA-type catalytic domain maps to 155–612 (FIPLATSALA…NLNQILPDLV (458 aa)). The tract at residues 194–199 (SVGRVQ) is interaction with DNA. The O-(5'-phospho-DNA)-tyrosine intermediate role is filled by Y337. The segment at 631 to 651 (SDRAKPKSAVKKSSKSNGETD) is disordered.

It belongs to the type IA topoisomerase family. Mg(2+) is required as a cofactor.

It catalyses the reaction ATP-independent breakage of single-stranded DNA, followed by passage and rejoining.. In terms of biological role, releases the supercoiling and torsional tension of DNA, which is introduced during the DNA replication and transcription, by transiently cleaving and rejoining one strand of the DNA duplex. Introduces a single-strand break via transesterification at a target site in duplex DNA. The scissile phosphodiester is attacked by the catalytic tyrosine of the enzyme, resulting in the formation of a DNA-(5'-phosphotyrosyl)-enzyme intermediate and the expulsion of a 3'-OH DNA strand. The free DNA strand then undergoes passage around the unbroken strand, thus removing DNA supercoils. Finally, in the religation step, the DNA 3'-OH attacks the covalent intermediate to expel the active-site tyrosine and restore the DNA phosphodiester backbone. This is DNA topoisomerase 3 from Haemophilus influenzae (strain ATCC 51907 / DSM 11121 / KW20 / Rd).